We begin with the raw amino-acid sequence, 132 residues long: Small ribosomal subunit protein uS8 (132 aa).

Belongs to the universal ribosomal protein uS8 family. In terms of assembly, part of the 30S ribosomal subunit. Contacts proteins S5 and S12.

Functionally, one of the primary rRNA binding proteins, it binds directly to 16S rRNA central domain where it helps coordinate assembly of the platform of the 30S subunit. This is Small ribosomal subunit protein uS8 from Halalkalibacterium halodurans (strain ATCC BAA-125 / DSM 18197 / FERM 7344 / JCM 9153 / C-125) (Bacillus halodurans).